Here is a 211-residue protein sequence, read N- to C-terminus: ATP phosphoribosyltransferase (211 aa).

Belongs to the ATP phosphoribosyltransferase family. Short subfamily. Heteromultimer composed of HisG and HisZ subunits.

The protein localises to the cytoplasm. It carries out the reaction 1-(5-phospho-beta-D-ribosyl)-ATP + diphosphate = 5-phospho-alpha-D-ribose 1-diphosphate + ATP. Its pathway is amino-acid biosynthesis; L-histidine biosynthesis; L-histidine from 5-phospho-alpha-D-ribose 1-diphosphate: step 1/9. Its function is as follows. Catalyzes the condensation of ATP and 5-phosphoribose 1-diphosphate to form N'-(5'-phosphoribosyl)-ATP (PR-ATP). Has a crucial role in the pathway because the rate of histidine biosynthesis seems to be controlled primarily by regulation of HisG enzymatic activity. The polypeptide is ATP phosphoribosyltransferase (Bacillus cereus (strain G9842)).